The sequence spans 97 residues: Co-chaperonin GroES (97 aa).

This sequence belongs to the GroES chaperonin family. Heptamer of 7 subunits arranged in a ring. Interacts with the chaperonin GroEL.

It localises to the cytoplasm. Its function is as follows. Together with the chaperonin GroEL, plays an essential role in assisting protein folding. The GroEL-GroES system forms a nano-cage that allows encapsulation of the non-native substrate proteins and provides a physical environment optimized to promote and accelerate protein folding. GroES binds to the apical surface of the GroEL ring, thereby capping the opening of the GroEL channel. The protein is Co-chaperonin GroES of Azotobacter vinelandii (strain DJ / ATCC BAA-1303).